Reading from the N-terminus, the 208-residue chain is Large ribosomal subunit protein uL3 (208 aa).

A disordered region spans residues 116-148 (GFQGVIKRHGQSRGPMAHGSRYHRRPGSMGPVA).

This sequence belongs to the universal ribosomal protein uL3 family. In terms of assembly, part of the 50S ribosomal subunit. Forms a cluster with proteins L14 and L19.

In terms of biological role, one of the primary rRNA binding proteins, it binds directly near the 3'-end of the 23S rRNA, where it nucleates assembly of the 50S subunit. In Streptococcus pneumoniae (strain Hungary19A-6), this protein is Large ribosomal subunit protein uL3.